Here is a 239-residue protein sequence, read N- to C-terminus: tRNA (guanine-N(7)-)-methyltransferase (239 aa).

S-adenosyl-L-methionine-binding residues include E69, E94, D121, and D144. The active site involves D144. Substrate is bound at residue K148. Residues 150 to 155 are interaction with RNA; the sequence is RHNKRR. Residues D180 and 217 to 220 contribute to the substrate site; that span reads TKFE.

It belongs to the class I-like SAM-binding methyltransferase superfamily. TrmB family. In terms of assembly, monomer.

The enzyme catalyses guanosine(46) in tRNA + S-adenosyl-L-methionine = N(7)-methylguanosine(46) in tRNA + S-adenosyl-L-homocysteine. It functions in the pathway tRNA modification; N(7)-methylguanine-tRNA biosynthesis. In terms of biological role, catalyzes the formation of N(7)-methylguanine at position 46 (m7G46) in tRNA. This Photorhabdus laumondii subsp. laumondii (strain DSM 15139 / CIP 105565 / TT01) (Photorhabdus luminescens subsp. laumondii) protein is tRNA (guanine-N(7)-)-methyltransferase.